We begin with the raw amino-acid sequence, 248 residues long: N-acylneuraminate-9-phosphatase (248 aa).

Asp-12 provides a ligand contact to Mg(2+). Phosphate contacts are provided by Leu-13, Asp-14, Thr-131, Asn-132, and Lys-164. A Mg(2+)-binding site is contributed by Asp-14. Asp-189 lines the Mg(2+) pocket.

It belongs to the HAD-like hydrolase superfamily. NANP family. The cofactor is Mg(2+).

It carries out the reaction N-acetylneuraminate 9-phosphate + H2O = N-acetylneuraminate + phosphate. The enzyme catalyses N-glycoloylneuraminate 9-phosphate + H2O = N-glycoloylneuraminate + phosphate. The protein operates within amino-sugar metabolism; N-acetylneuraminate biosynthesis. Its activity is regulated as follows. Inhibited by calcium. Inhibited by vanadate, sodium orthovanate and phosphonate. In terms of biological role, catalyzes the dephosphorylation of N-acylneuraminate 9-phosphate (Neu5Ac-9-P) to sialic acid N-acetylneuraminic acid (Neu5Ac). May also use N-glycoloylneuraminate 9-phosphate as substrate. The sequence is that of N-acylneuraminate-9-phosphatase from Mus musculus (Mouse).